Here is a 429-residue protein sequence, read N- to C-terminus: MATEQRPFHLVVFGASGFTGQFVTEEVAREQVDPERSSRLPWAVAGRSREKLQRVLEKAALKLGRPTLSSEVGIIICDIANPASLDEMAKQATVVLNCVGPYRFYGEPVIKACIENGASCIDISGEPQFLELMQLKYHEKAADKGVYIIGSSGFDSIPADLGVIYTRNKMNGTLTAVESFLTIHSGPEGLSIHDGTWKSAIYGFGDQSNLRKLRNVSNLKPVPLIGPKLKRRWPISYCRELKGYSIPFMGSDVSVVRRTQRYLYENLEESPVQYAAYVTVGGITSVIKLMFAGLFFLFFVRFGIGRQLLIKFPWFFSFGYFSKQGPTQKQIDAASFTLTFFGQGYSQGTGTDKNKPNIKICTQVKGPEAGYVATPIAMVQAAMTLLSDASHLPKAGGVFTPGAAFSKTKLIDRLNKHGIEFSVISSSEV.

At alanine 2 the chain carries N-acetylalanine. Serine 217 is subject to Phosphoserine.

Belongs to the saccharopine dehydrogenase family.

This Homo sapiens (Human) protein is Saccharopine dehydrogenase-like oxidoreductase (SCCPDH).